Here is a 221-residue protein sequence, read N- to C-terminus: Endonuclease V (221 aa).

Mg(2+) is bound by residues Asp43 and Asp109.

The protein belongs to the endonuclease V family. It depends on Mg(2+) as a cofactor.

It is found in the cytoplasm. It carries out the reaction Endonucleolytic cleavage at apurinic or apyrimidinic sites to products with a 5'-phosphate.. DNA repair enzyme involved in the repair of deaminated bases. Selectively cleaves double-stranded DNA at the second phosphodiester bond 3' to a deoxyinosine leaving behind the intact lesion on the nicked DNA. The sequence is that of Endonuclease V from Petrotoga mobilis (strain DSM 10674 / SJ95).